The primary structure comprises 430 residues: Adenylosuccinate synthetase (430 aa).

GTP is bound by residues 12 to 18 (GDEGKGK) and 40 to 42 (GHT). Residue Asp13 is the Proton acceptor of the active site. Mg(2+)-binding residues include Asp13 and Gly40. IMP-binding positions include 13–16 (DEGK), 38–41 (NAGH), Thr128, Arg142, Gln223, Thr238, and Arg302. Catalysis depends on His41, which acts as the Proton donor. 298-304 (TTTGRPR) serves as a coordination point for substrate. GTP is bound by residues Arg304, 330-332 (SID), and 412-414 (SVG).

It belongs to the adenylosuccinate synthetase family. As to quaternary structure, homodimer. It depends on Mg(2+) as a cofactor.

The protein localises to the cytoplasm. The catalysed reaction is IMP + L-aspartate + GTP = N(6)-(1,2-dicarboxyethyl)-AMP + GDP + phosphate + 2 H(+). It participates in purine metabolism; AMP biosynthesis via de novo pathway; AMP from IMP: step 1/2. Functionally, plays an important role in the de novo pathway of purine nucleotide biosynthesis. Catalyzes the first committed step in the biosynthesis of AMP from IMP. This Streptococcus pyogenes serotype M49 (strain NZ131) protein is Adenylosuccinate synthetase.